The primary structure comprises 88 residues: Small ribosomal subunit protein bS20 (88 aa).

The tract at residues 1–28 (MANTSSAKKATRKIARRTAVNKSRRTQM) is disordered.

In terms of biological role, binds directly to 16S ribosomal RNA. This Rhodopseudomonas palustris (strain ATCC BAA-98 / CGA009) protein is Small ribosomal subunit protein bS20.